Reading from the N-terminus, the 993-residue chain is MFSASHFCSGSLMMSHPLSSLRDLEYHGAFVERHIGPNDVEIAQMLRVVGYDSLESLTDAIVPEKIRSTVALDLPKGITEEEALAKIRVIANKNRVFRSFIGQGYYGTHTPKVILRNILENPAWYTAYTPYQAEISQGRMEALINFQTMCADLTGMEIANASLLDEATAAAEAMSLAKRSAKSRSDLFFVHDAVHPQTLELLRTRAEPLGIVLRVGTPEEALQVDVFGILLQYPDTFGRIGDHRVLADAVHARGGLVAVASDLLALTLITPPGEWGADIVVGNSQRFGVPFGFGGPHAGFMACRDIYKRSIPGRLIGVSVDAAGHPAYRLALQTREQHIRREKATSNICTAQVLLAVMASMYAVYHGPQGLLRIAWRTHRMAAILAAALRGAGLTVGEYFFDTLHIVGIDALAIHCAAAAAGMNLRMIDNAQIGISLDETVTRSDVVALGQVFGVQVDVEALDAITADALPAGLLRSSAFLTHPVFNTHHSEHELLRYLRMLADKDLAMDRTMIPLGSCTMKLNATAEMIPVTWQEFACIHPLAPVVQWSGYRQLIDELEAMLVECTGYDAISLQPNSGAQGEYAGLLAIRAYHRSRGEERRNVCLIPESAHGTNPASAQLCGMQVVIIKCDRSGNVDVDDLRMKAEKYSDTLAALMVTYPSTHGVFEEAITEICEIVHAHGGQVYTDGANMNALVGVAKPGRWGSDVSHLNLHKTFCIPHGGGGPGVGPCAVKAHLAPFLPKTLPLPGDAAGLPVQGTQEAKVGMVSAANFGSASILPVSWMYITMMGAAGLRKATQVALLNANYIAKRLAPHYKTLYTGRHGLVAHECILDVRSLEKVSGVSAEDIAKRLIDFGFHAPTLSFPVAGTLMVEPTESESQQELDRFVDAMIQIRGEIAAIEKGHLDPEDNPLKQAPHTAVQVMASQWGHAYSRELAAFPLGVLHHAKYWPPVARVDNVYGDKHVMCACIPVEAYKEKGDSEIQDLIEEDASRC.

N6-(pyridoxal phosphate)lysine is present on Lys715.

Belongs to the GcvP family. The glycine cleavage system is composed of four proteins: P, T, L and H. Requires pyridoxal 5'-phosphate as cofactor.

The enzyme catalyses N(6)-[(R)-lipoyl]-L-lysyl-[glycine-cleavage complex H protein] + glycine + H(+) = N(6)-[(R)-S(8)-aminomethyldihydrolipoyl]-L-lysyl-[glycine-cleavage complex H protein] + CO2. Functionally, the glycine cleavage system catalyzes the degradation of glycine. The P protein binds the alpha-amino group of glycine through its pyridoxal phosphate cofactor; CO(2) is released and the remaining methylamine moiety is then transferred to the lipoamide cofactor of the H protein. The polypeptide is Glycine dehydrogenase (decarboxylating) (Xylella fastidiosa (strain Temecula1 / ATCC 700964)).